Reading from the N-terminus, the 233-residue chain is MREHRPIIALDFPSFEAVKEFLALFPAEESLYLKVGMELYYAAGPEIVSYLKGLGHSVFLDLKLHDIPNTVKSAMKILSQLGVDMTNVHAAGGVEMMKAAREGLGSQAKLIAVTQLTSTSEAQMQEFQNIQTSLQESVIHYAKKTAEAGLDGVVCSAQEVQVIKQATNPDFICLTPGIRPAGVAVGDQKRVMTPADAYQIGSDYIVVGRPITQAEDPVAAYHAIKDEWTQDWN.

Residues Asp-11, Lys-34, 61–70, Thr-117, Arg-179, Gln-188, Gly-208, and Arg-209 each bind substrate; that span reads DLKLHDIPNT. Lys-63 (proton donor) is an active-site residue.

This sequence belongs to the OMP decarboxylase family. Type 1 subfamily. Homodimer.

The enzyme catalyses orotidine 5'-phosphate + H(+) = UMP + CO2. It participates in pyrimidine metabolism; UMP biosynthesis via de novo pathway; UMP from orotate: step 2/2. Its function is as follows. Catalyzes the decarboxylation of orotidine 5'-monophosphate (OMP) to uridine 5'-monophosphate (UMP). The protein is Orotidine 5'-phosphate decarboxylase of Streptococcus pneumoniae serotype 4 (strain ATCC BAA-334 / TIGR4).